We begin with the raw amino-acid sequence, 284 residues long: Nucleotide-binding protein PputGB1_0956 (284 aa).

8–15 (GRSGSGKS) contributes to the ATP binding site. 60–63 (DARN) provides a ligand contact to GTP.

The protein belongs to the RapZ-like family.

Its function is as follows. Displays ATPase and GTPase activities. This Pseudomonas putida (strain GB-1) protein is Nucleotide-binding protein PputGB1_0956.